A 597-amino-acid polypeptide reads, in one-letter code: uncharacterized protein (597 aa).

The VWFA domain occupies 378–575 (EVSFVVDNSG…YLPRELLRTL (198 aa)).

This is an uncharacterized protein from Treponema pallidum (strain Nichols).